The sequence spans 331 residues: Aspartate carbamoyltransferase catalytic subunit (331 aa).

Carbamoyl phosphate is bound by residues arginine 76 and threonine 77. Residue lysine 104 coordinates L-aspartate. Carbamoyl phosphate is bound by residues arginine 126, histidine 154, and glutamine 157. Residues arginine 187 and arginine 246 each coordinate L-aspartate. 2 residues coordinate carbamoyl phosphate: glycine 287 and proline 288.

The protein belongs to the aspartate/ornithine carbamoyltransferase superfamily. ATCase family. In terms of assembly, heterododecamer (2C3:3R2) of six catalytic PyrB chains organized as two trimers (C3), and six regulatory PyrI chains organized as three dimers (R2).

The enzyme catalyses carbamoyl phosphate + L-aspartate = N-carbamoyl-L-aspartate + phosphate + H(+). It functions in the pathway pyrimidine metabolism; UMP biosynthesis via de novo pathway; (S)-dihydroorotate from bicarbonate: step 2/3. In terms of biological role, catalyzes the condensation of carbamoyl phosphate and aspartate to form carbamoyl aspartate and inorganic phosphate, the committed step in the de novo pyrimidine nucleotide biosynthesis pathway. This chain is Aspartate carbamoyltransferase catalytic subunit, found in Dehalococcoides mccartyi (strain CBDB1).